The primary structure comprises 1647 residues: Probable ubiquitin fusion degradation protein C12B10.01c (1647 aa).

Polar residues predominate over residues 192–209 (TYSDSSNYHTSTDSSQYN). 2 disordered regions span residues 192–288 (TYSD…PSAA) and 1039–1076 (ESMS…SSTS). Composition is skewed to acidic residues over residues 218 to 228 (DTNDGTDDDIN) and 245 to 273 (ERDE…ENEN). The span at 1039 to 1050 (ESMSGSSRNSSG) shows a compositional bias: low complexity. Polar residues predominate over residues 1051–1065 (DYTDSMSQDAPNHTT). The segment covering 1066 to 1076 (EPSERRDSSTS) has biased composition (basic and acidic residues). The segment at 1183-1257 (IENILTDFSN…SVSFLLSRNP (75 aa)) is K-box. The 354-residue stretch at 1294–1647 (ATYAASENIL…LEGQGSFHLS (354 aa)) folds into the HECT domain. Residue Cys1614 is the Glycyl thioester intermediate of the active site.

This sequence belongs to the UPL family. K-HECT subfamily.

It catalyses the reaction S-ubiquitinyl-[E2 ubiquitin-conjugating enzyme]-L-cysteine + [acceptor protein]-L-lysine = [E2 ubiquitin-conjugating enzyme]-L-cysteine + N(6)-ubiquitinyl-[acceptor protein]-L-lysine.. Functionally, E3 ubiquitin-protein ligase which accepts ubiquitin from an E2 ubiquitin-conjugating enzyme in the form of a thioester and then directly transfers the ubiquitin to targeted substrates. This Schizosaccharomyces pombe (strain 972 / ATCC 24843) (Fission yeast) protein is Probable ubiquitin fusion degradation protein C12B10.01c.